The primary structure comprises 311 residues: MAEMDLVAELPRPAGAARWAEVMARFAARLGEQGRRVVLITSGGTKVPLEARAVRFLDNFSSGRRGAASAEVFLAAGYGVLFLYRARSAFPYAHRFPPQAWLSALRPSGPAQSGKLSLEAEENALPGFAAALQSYQEAAAAGTFLAVEFTTLADYLHLLQAAALALSPLGSSAMFYLAAAVSDFYIPVSEMPEHKIHSSGGPLQITMKMVPKMLSPLVKDWAPKAFVVSFKLETDPDIIISRARNALEVYQHQVVVANILESIKSFVIIVTKDSETELLLSEEEVAKGLVIEEKIVDDLRSRHTAFICDKN.

Alanine 2 bears the N-acetylalanine mark.

Belongs to the PPC synthetase family. In terms of assembly, homodimer.

The enzyme catalyses (R)-4'-phosphopantothenate + L-cysteine + ATP = N-[(R)-4-phosphopantothenoyl]-L-cysteine + AMP + diphosphate + H(+). The catalysed reaction is (R)-4'-phosphopantothenate + L-cysteine + CTP = N-[(R)-4-phosphopantothenoyl]-L-cysteine + CMP + diphosphate + H(+). Its pathway is cofactor biosynthesis; coenzyme A biosynthesis; CoA from (R)-pantothenate: step 2/5. Catalyzes the second step in the biosynthesis of coenzyme A from vitamin B5, where cysteine is conjugated to 4'-phosphopantothenate to form 4-phosphopantothenoylcysteine. Has a preference for ATP over CTP as a cosubstrate. This Mus musculus (Mouse) protein is Phosphopantothenate--cysteine ligase (Ppcs).